A 382-amino-acid chain; its full sequence is Lipid-A-disaccharide synthase (382 aa).

This sequence belongs to the LpxB family.

It carries out the reaction 2-N,3-O-bis[(3R)-3-hydroxytetradecanoyl]-alpha-D-glucosaminyl 1-phosphate + UDP-2-N,3-O-bis[(3R)-3-hydroxytetradecanoyl]-alpha-D-glucosamine = lipid A disaccharide (E. coli) + UDP + H(+). The enzyme catalyses a lipid X + a UDP-2-N,3-O-bis[(3R)-3-hydroxyacyl]-alpha-D-glucosamine = a lipid A disaccharide + UDP + H(+). It functions in the pathway glycolipid biosynthesis; lipid IV(A) biosynthesis; lipid IV(A) from (3R)-3-hydroxytetradecanoyl-[acyl-carrier-protein] and UDP-N-acetyl-alpha-D-glucosamine: step 5/6. Functionally, condensation of UDP-2,3-diacylglucosamine and 2,3-diacylglucosamine-1-phosphate to form lipid A disaccharide, a precursor of lipid A, a phosphorylated glycolipid that anchors the lipopolysaccharide to the outer membrane of the cell. This Escherichia coli O8 (strain IAI1) protein is Lipid-A-disaccharide synthase.